The chain runs to 242 residues: Transcription factor Spi-C (242 aa).

The segment at residues 112-195 (LRLFEYLFES…IRRKLTYQFS (84 aa)) is a DNA-binding region (ETS).

It belongs to the ETS family. Binds DNA as a monomer. As to expression, expressed in lymphoid tissues, including spleen, bone marrow and thymus. According to PubMed:19037245, highly expressed in red pulp macrophages and, at lower, levels in B-cells, but not in other cells, including, monocytes, dendritic cells and other tissue macrophages. According to PubMed:10464163 expressed in pre- and mature B-cells but not in immature B-cells; according to PubMed:10187812 not expressed in pre- but predominantly in mature B-cells and at lower levels in macrophages.

The protein resides in the nucleus. In terms of biological role, controls the development of red pulp macrophages required for red blood cells recycling and iron homeostasis. Transcription factor that binds to the PU-box, a purine-rich DNA sequence (5'-GAGGA[AT]-3') that can act as a lymphoid-specific enhancer. Regulates VCAM1 gene expression. This chain is Transcription factor Spi-C (Spic), found in Mus musculus (Mouse).